A 225-amino-acid polypeptide reads, in one-letter code: Uridylate kinase (225 aa).

9 to 10 (GS) contacts ATP. Residue Gly44 participates in UMP binding. Residues Gly45 and Arg49 each contribute to the ATP site. Residues Asp66 and 114 to 120 (THPGHTT) contribute to the UMP site. Positions 140, 141, 146, and 149 each coordinate ATP.

The protein belongs to the UMP kinase family. As to quaternary structure, homohexamer.

The protein resides in the cytoplasm. It carries out the reaction UMP + ATP = UDP + ADP. It participates in pyrimidine metabolism; CTP biosynthesis via de novo pathway; UDP from UMP (UMPK route): step 1/1. With respect to regulation, inhibited by UTP. Functionally, catalyzes the reversible phosphorylation of UMP to UDP. This chain is Uridylate kinase, found in Thermococcus gammatolerans (strain DSM 15229 / JCM 11827 / EJ3).